A 260-amino-acid chain; its full sequence is Pyridoxine 5'-phosphate synthase (260 aa).

Asn6 serves as a coordination point for 3-amino-2-oxopropyl phosphate. Residue 8-9 participates in 1-deoxy-D-xylulose 5-phosphate binding; the sequence is DH. Arg17 contacts 3-amino-2-oxopropyl phosphate. His42 (proton acceptor) is an active-site residue. Residues Arg44 and His49 each contribute to the 1-deoxy-D-xylulose 5-phosphate site. The Proton acceptor role is filled by Glu69. Thr99 contacts 1-deoxy-D-xylulose 5-phosphate. His213 functions as the Proton donor in the catalytic mechanism. Residues Gly214 and 235-236 each bind 3-amino-2-oxopropyl phosphate; that span reads GQ.

The protein belongs to the PNP synthase family. Homooctamer; tetramer of dimers.

It is found in the cytoplasm. It carries out the reaction 3-amino-2-oxopropyl phosphate + 1-deoxy-D-xylulose 5-phosphate = pyridoxine 5'-phosphate + phosphate + 2 H2O + H(+). Its pathway is cofactor biosynthesis; pyridoxine 5'-phosphate biosynthesis; pyridoxine 5'-phosphate from D-erythrose 4-phosphate: step 5/5. Functionally, catalyzes the complicated ring closure reaction between the two acyclic compounds 1-deoxy-D-xylulose-5-phosphate (DXP) and 3-amino-2-oxopropyl phosphate (1-amino-acetone-3-phosphate or AAP) to form pyridoxine 5'-phosphate (PNP) and inorganic phosphate. The protein is Pyridoxine 5'-phosphate synthase of Sulfurimonas denitrificans (strain ATCC 33889 / DSM 1251) (Thiomicrospira denitrificans (strain ATCC 33889 / DSM 1251)).